We begin with the raw amino-acid sequence, 268 residues long: ClpXP adapter protein SpxH (268 aa).

The protein belongs to the SpxH family. Interacts with Spx.

The protein resides in the cytoplasm. Functionally, adapter protein required for efficient degradation of Spx by ClpXP under non-stress conditions. Interaction with Spx stabilizes Spx and exposes the C-terminus of Spx for recognition and proteolysis by ClpXP. The polypeptide is ClpXP adapter protein SpxH (Staphylococcus aureus (strain COL)).